Here is a 904-residue protein sequence, read N- to C-terminus: MAMNLKNSSSGGNLTSSPSYNSFSSLNLSGNSFNNGSGSGSGSGSGSNEYIPLCFSKDVFTSNTFEVDQFISDCRKRVNLESVQKDLREYSKHLDSELIELINKEYQSFFSLSTSLVGFDTILNEFSISQSSIKSEIKSFNNEIVKVRGLVEDKLNEKKSIEQKKKLLQLYISISETLNNMNHLFDQLYQLTHPNDFKKINNNNNNHTNNETNINDGDVLELLIDRISNSFYQIQNQMSSLTNDELKFNIFQSLSLKIMDLSNKIEEKVEPIFKESLKRFINVNNNNKEIVDDNNEKQNKYDERILLVCLKTFQTIDKLNVPYKLFKTLIVKPRLAQIVSLRNLEINKSTTDGLSQIYNSIIEFLKNQCSSFFDISNLINNNLKEKQSNNNNNNNNNNNNNNNNNNNNQINNNSNNNNNNINNNNINNNYNNNIILYNNYNFISQSVLPEIDESLGFFKQIFATGIPDLFYKNYYLTFNFIQSIEVNFLTNKELLTQFRQSSSYSSLWKKWNFAVYFQLCFTNIAQHFEFNYLRIPLFDQLTLPTNNITNNNNNNNENNNEFYLKSTDGLRLSMDKCWSNSNFIFDLSSKFFKLFLQLIARYDTFISDTLIPLELELQQQLQQQQLQQQQQQQQQQQNIGDSVIKITPKSPPSLSNQSPISSSTTLNNKQSSPENFIYIISDIYKIKSKISTNYKELIIKTIGNHQNQHEILNLINDGILESCKTLEQLIPRISIIIENHLISKCLEPIEIISTLRSTYRMTNKPVPTKPSIYVSNLISPLEILINNKASSLHFIPPEIKLNWAISVLTPVTESFKNAATNLIQSVTQSNDIINKMVKKSKPTTTTSGGDMSDMDKISLQLYLDVDKFGLYIQKFGINLLTFEPFLGLKSIVEPFKKLILNQNK.

Disordered stretches follow at residues 384 to 424 (KEKQ…INNN) and 644 to 669 (IKITPKSPPSLSNQSPISSSTTLNNK). Low complexity-rich tracts occupy residues 388–424 (SNNNNNNNNNNNNNNNNNNNNQINNNSNNNNNNINNN) and 652–663 (PSLSNQSPISSS).

This sequence belongs to the COG2 family. Component of the conserved oligomeric Golgi complex which is composed of eight different subunits and is required for normal Golgi morphology and localization.

It localises to the golgi apparatus membrane. Its function is as follows. Required for normal Golgi function. The chain is Conserved oligomeric Golgi complex subunit 2 (cog2) from Dictyostelium discoideum (Social amoeba).